The sequence spans 198 residues: Probable minor pilin MMP0709 (198 aa).

A propeptide spanning residues M1 to G5 is cleaved from the precursor. The QXSXEXXXL signature appears at Q6 to L14.

The N-terminus is probably cleaved by the prepilin peptidase EppA, which recognizes the class III signal sequence.

The protein localises to the secreted. The protein resides in the cell surface. It localises to the fimbrium. In Methanococcus maripaludis (strain DSM 14266 / JCM 13030 / NBRC 101832 / S2 / LL), this protein is Probable minor pilin MMP0709.